Consider the following 969-residue polypeptide: MNWQANIHKLPALLQGRLKNDLARFQEALEQKNLDTVFKAKTLKTLCLVWGASEFVATNCIRWPSLLLDLQGSGNLFRAYEPNHYVKSLAQQLTNISTETELMVVLRRFRQREMVRIVWRDLAGWASLDEVFRELSQLAEACLNSALACLHYWQSQALGTPYGSISGKPQSMVVLGMGKLGARELNLSSDIDLIFAYPESGETRGAQRTLNNEEYFIRLARRLIRVLDERTEEGFVFRVDMRLRPDGDSGPLVASFNAMENYYQNQGRDWERYAMIKARVVAGDCQAGTRLMAMLRPFSYRRYLDFGAIESLRSMKAMIAQELRRQGIKANIKLGPGGIREVEFIGQSFQLIRGGRESALQERGILRVLTLLAERDHLPYYAKEELCAAYVFLRRVEHRLQAYRDEQTHDLPTSTEGRVRLAFAMGYRDWEAFASALEEHRRRVQEHFEQLFAAPHMDITDQMAQEKRLAEVWLGGELREASLAVLSAAGYRAPEEAVQTLMYLRQSYTVRALSAQARIRLDRLMPLLLGAVGRTEYPEQCLQRVIILLETVAQRTAYLALLAEYPMALSQLVKLCAASPLIARQLTRYPLLLDELLDPRSLYQVLGYDSLAEDLKWSLESIPGDDLEQQMELLRHFCQRQTLRVAAADVTGVLPLMKVGDHLTYLAEVILKKALELSWRHLVHRHGRLQSSTGEQPEESGFAVIGYGKLGGYELGYGSDLDLVFLHNAKPGDPPSEGKKPLDPVVFYSRLGQRLIHILQTSTPSGKLYEVDTRLRPSGVSGLLVSGLDAYRGYQCMQAWTWEHQALVRARFVAGDARLGAAFTAMRQEILGRQRDPIKLRDEVRHMRAKMRNQLDRSQGGWFDLKQGRGGIADIEFIVQYGVLAWAHAHPQLLEYPDNIRILEGFAQAGLLASEESQLLADAYRAYRAAANRLNLQTHEARVEEGQFRQERIAVQQLWSALLEDESAK.

The segment at 1-456 (MNWQANIHKL…HFEQLFAAPH (456 aa)) is adenylyl removase. The interval 466–969 (EKRLAEVWLG…SALLEDESAK (504 aa)) is adenylyl transferase.

This sequence belongs to the GlnE family. The cofactor is Mg(2+).

The enzyme catalyses [glutamine synthetase]-O(4)-(5'-adenylyl)-L-tyrosine + phosphate = [glutamine synthetase]-L-tyrosine + ADP. It carries out the reaction [glutamine synthetase]-L-tyrosine + ATP = [glutamine synthetase]-O(4)-(5'-adenylyl)-L-tyrosine + diphosphate. In terms of biological role, involved in the regulation of glutamine synthetase GlnA, a key enzyme in the process to assimilate ammonia. When cellular nitrogen levels are high, the C-terminal adenylyl transferase (AT) inactivates GlnA by covalent transfer of an adenylyl group from ATP to specific tyrosine residue of GlnA, thus reducing its activity. Conversely, when nitrogen levels are low, the N-terminal adenylyl removase (AR) activates GlnA by removing the adenylyl group by phosphorolysis, increasing its activity. The regulatory region of GlnE binds the signal transduction protein PII (GlnB) which indicates the nitrogen status of the cell. The sequence is that of Bifunctional glutamine synthetase adenylyltransferase/adenylyl-removing enzyme from Nitrosococcus oceani (strain ATCC 19707 / BCRC 17464 / JCM 30415 / NCIMB 11848 / C-107).